Here is a 1601-residue protein sequence, read N- to C-terminus: MSEELKVVLRRSEQHSGFGFSLLGTTGPPHVIYDIVENSPAADCGAVEAGDVILKVNGTDVHRYTTKEVLKCLRLSEQLVTLELKRDPKLKARIKEQLANTQSPHYVDIESPNIYDYHSSSTNSSPNHRPNAGGKGAATTPSQTGLRYKSPTHLPSLRQNSSPLLASGSTTTTTTATHTHSHSRNSSASSTKIKVVETSITTSTTNVVGLTSPTGSVGGGVGGEATSPTFRPSRIPQALTKCAVPKPVPVLHSPQNKRPRPSQIPTKAANGNGNGHTAHLPPQSLQHSNSYSGSPVTRQRFADREPEREPEPNSAPPQPAKAPRFEAYMMTGDLILNLSRTPQTSNPLPAQAKKIDSLRDSPSRLVNPRINGALAPRASGESSPTSSSSVDSPTNTSSDSVKREAKLLQKQQQQQQQTYQQQQQRDSINNSYNRKDSLTNDTLLMCEELEPDEEGEYVLEEDNKQQRQRQQQQRYRQQQNQQRYEYYQNEDELEEQEEVEEEREEDQTHYDITNIETYQSGVGRGDDDDSDRQCLVDDDDDDDAYDDEENDAGDEDYSTNSLGSGSAKQRLRALKQRTATRQQQRNRDAVDCAGRSGSGSSSTTVKSEAGGLGLDETSFSVPTSPISLSTPLIDKETANSVPTSPEPSSLVPESSSGAGAGAVVVRRHNGHVVRKCDAAGFRTSKSEDHLQQIQREGIAAVIPIDIDEDVNSSLNTLLDTRQDSEDSQSMATVIVNNSSLASNNNEGEQTDNRSSSSSSNSSDNNNCSSNTGEPATSETATATATIITATSTRTMNCSSKLNYILCKKASDRDRIVWTYNAPLQPHQLAALQRQQQQQEQQFQQQQQQLHQQHLQQQQQLQQQHQQQQQQQQQQQQQQLYGQQSHSNSHSSSISSSPQHSAVGSPASPTSVSSSVMSSSGSKGALGLGSSSNGPMAAVQQQQLREREQGGQVAQPPSGIPGLLSCPGGGCGNNGGGGGIGGGGNNDQSVSEAISNISSPDYQDDDNLLSSRDILGGMVLSDPSDSDSTILVSDAAAHQRQQLKQQLRAQQQQQRERERDRDRDREQSEHKVVIQVRGLDSNSSGGNGTNGRSEEDVVTLTDEPLGTMTVGMRDASPPVSDDGSDVESLHSYHYSPKAVDMPSAIRLAKRLHSLDGFKKSDVSRHLSKNNDFSRAVADEYLKHFTFEKKSLDQALREFLQQFSLSGETQERERVLVHFSKRFLDCNPGTFNSQDAVHTLTCAIMLLNTDLHGQNINRKMSCAEFVDNLADLNDGENFPKDVLKSLYQAIKTKPLEWALDEEAGDLQQQRANNSALGNVGLNPFLDPPELATAVEYKKGYVMRKCCYDSSFKKTPFGKRSWKMFYCTLRDLVLYLHKDEHGFRKSQMSDNLHNAIRIHHALATKANDYTKKQHVFRLQTADQAEYLFQTSDSKELQSWVETINYVCAAISAPPLEGGVGSQKRFQRPLLPSKQSKLMLKEQLDSHEVQLAQLDQELNEHKKGPIPSKGLALQNYKEKESYLQYELRRYRTYVSILSAKMLADQQQLELQAQQPSPASHEEEADTFPVGTTACTPPTPQSINQKDQQKEQQQQQPTNRKEKKKK.

The segment at 1-340 (MSEELKVVLR…TGDLILNLSR (340 aa)) is mediates regulation of axon branching and microtubule organization. One can recognise a PDZ domain in the interval 6 to 88 (KVVLRRSEQH…LVTLELKRDP (83 aa)). 7 disordered regions span residues 113-192 (NIYD…SSTK), 211-322 (TSPT…PAKA), 339-440 (SRTP…SLTN), 459-657 (LEED…SSSG), 737-780 (NSSL…SETA), 872-965 (QQQQ…LLSC), and 1040-1126 (QQLK…SDVE). Over residues 118 to 128 (HSSSTNSSPNH) the composition is skewed to polar residues. Over residues 166-191 (ASGSTTTTTTATHTHSHSRNSSASST) the composition is skewed to low complexity. Residues 283-297 (QSLQHSNSYSGSPVT) show a composition bias toward polar residues. Over residues 300–311 (RFADREPEREPE) the composition is skewed to basic and acidic residues. The Microtubule elimination domain (MTED); Binds tubulin and blocks microtubule polymerization signature appears at 323–340 (PRFEAYMMTGDLILNLSR). The segment covering 339–348 (SRTPQTSNPL) has biased composition (polar residues). Over residues 353-362 (KKIDSLRDSP) the composition is skewed to basic and acidic residues. Low complexity-rich tracts occupy residues 382–399 (SSPTSSSSVDSPTNTSSD), 409–424 (QKQQQQQQQTYQQQQQ), and 468–487 (QRQQQQRYRQQQNQQRYEYY). A compositionally biased stretch (acidic residues) spans 488-505 (QNEDELEEQEEVEEEREE). Residues 510 to 519 (YDITNIETYQ) are compositionally biased toward polar residues. Positions 526–557 (DDDDSDRQCLVDDDDDDDAYDDEENDAGDEDY) are enriched in acidic residues. Polar residues-rich tracts occupy residues 558 to 567 (STNSLGSGSA) and 617 to 630 (TSFSVPTSPISLST). Residues 640–657 (SVPTSPEPSSLVPESSSG) are compositionally biased toward low complexity. The segment covering 737 to 747 (NSSLASNNNEG) has biased composition (polar residues). Low complexity-rich tracts occupy residues 752–780 (NRSSSSSSNSSDNNNCSSNTGEPATSETA), 872–942 (QQQQ…QQQQ), 949–965 (GGQVAQPPSGIPGLLSC), and 1040–1052 (QQLKQQLRAQQQQ). The tract at residues 894–1601 (SSSPQHSAVG…PTNRKEKKKK (708 aa)) is mediates association to the membrane and rescricts the microtubule-inhibiting activity to the cell cortex. Positions 1053-1071 (QRERERDRDRDREQSEHKV) are enriched in basic and acidic residues. Residues 1125–1291 (VESLHSYHYS…KSLYQAIKTK (167 aa)) enclose the SEC7 domain. Residues 1332–1445 (VEYKKGYVMR…WVETINYVCA (114 aa)) enclose the PH domain. Positions 1544-1601 (LELQAQQPSPASHEEEADTFPVGTTACTPPTPQSINQKDQQKEQQQQQPTNRKEKKKK) are disordered. The span at 1568–1579 (TACTPPTPQSIN) shows a compositional bias: polar residues.

The protein belongs to the PSD family. As to quaternary structure, interacts (via MTED motif) with tubulin. As to expression, expressed in the head (at protein level).

The protein resides in the cell projection. Its subcellular location is the axon. It is found in the cytoplasm. The protein localises to the cell membrane. It localises to the cell cortex. Guanine nucleotide exchange factor for Arf6. Regulates axon growth and branching by inhibiting microtubule polymerisation at the cortex. Together with shot, promotes axonal microtubule bundle integrity. Required for normal ethanol-induced tolerance and preference. Probably by activating Arf6, counteracts ethanol-induced sedation. The chain is PH and SEC7 domain-containing protein from Drosophila melanogaster (Fruit fly).